Here is a 214-residue protein sequence, read N- to C-terminus: MNIVFLGPPGAGKGTYAKELKEILGIPHISTGDMFREEISAKSELGRKVEDILKRGELVPDDLTNVIVKERLSKPDCKKGFILDGYPRTVAQAKALDEILKKLGRELKFAIYFEVSEDVVVKRISNRRICKNCGKIYNLITLPPKINGKCDVCGGELYQREDDREEVVRRRYKVYMDNTYPVIEYYRKSNKLFTVDGSMDVDSVIKEVLNIIRR.

Residue 10–15 (GAGKGT) participates in ATP binding. The tract at residues 30–59 (STGDMFREEISAKSELGRKVEDILKRGELV) is NMP. AMP-binding positions include threonine 31, arginine 36, 57-59 (ELV), 85-88 (GYPR), and glutamine 92. The tract at residues 126-163 (NRRICKNCGKIYNLITLPPKINGKCDVCGGELYQREDD) is LID. Position 127 (arginine 127) interacts with ATP. The Zn(2+) site is built by cysteine 130 and cysteine 133. An ATP-binding site is contributed by 136–137 (IY). The Zn(2+) site is built by cysteine 150 and cysteine 153. The AMP site is built by arginine 160 and arginine 171. Methionine 199 lines the ATP pocket.

The protein belongs to the adenylate kinase family. Monomer.

The protein resides in the cytoplasm. The catalysed reaction is AMP + ATP = 2 ADP. Its pathway is purine metabolism; AMP biosynthesis via salvage pathway; AMP from ADP: step 1/1. Functionally, catalyzes the reversible transfer of the terminal phosphate group between ATP and AMP. Plays an important role in cellular energy homeostasis and in adenine nucleotide metabolism. This chain is Adenylate kinase, found in Thermosipho melanesiensis (strain DSM 12029 / CIP 104789 / BI429).